We begin with the raw amino-acid sequence, 1021 residues long: Probable calcium-transporting ATPase 6, plasma membrane-type (1021 aa).

The Cytoplasmic segment spans residues 1–155; the sequence is MEGGRSWSIE…RSFWMFVWDA (155 aa). 2 helical membrane passes run 156 to 176 and 181 to 201; these read LHDL…VVGL and WPMG…VVLV. Topologically, residues 202–241 are cytoplasmic; that stretch reads TATSDYQQARKFMELDREKQKIYIRVTRDKKTKEVLVHDL. The next 2 helical transmembrane spans lie at 242-262 and 338-358; these read VVGD…GLFI and VATI…LVLL. Over 359-384 the chain is Cytoplasmic; the sequence is ARFLADKGMHVGLLNWSANDALTIVN. Residues 385 to 405 form a helical membrane-spanning segment; it reads YFAIAVTIIVVAVPEGLPLAV. Asp-441 acts as the 4-aspartylphosphate intermediate in catalysis. 2 residues coordinate Mg(2+): Asp-740 and Asp-744. Residues 807 to 827 form a helical membrane-spanning segment; sequence IVALIVNFVSACIIGSAPLTA. At 828 to 829 the chain is on the cytoplasmic side; the sequence is VQ. Transmembrane regions (helical) follow at residues 830 to 850 and 879 to 899; these read LLWV…TEPP and GLYQ…LLSI. Topologically, residues 900–942 are cytoplasmic; it reads EGPQSDKTINTLIFNSFVFCQVFNEINCREMEKINVLQGIFRN. A run of 2 helical transmembrane segments spans residues 943 to 963 and 974 to 994; these read WIFV…VEFL and GELW…SVIL. Over 995–1021 the chain is Cytoplasmic; that stretch reads KCIPVEFNKTNTKPHGYELIPEGPEIL.

It belongs to the cation transport ATPase (P-type) (TC 3.A.3) family. Type IIB subfamily.

It localises to the membrane. The enzyme catalyses Ca(2+)(in) + ATP + H2O = Ca(2+)(out) + ADP + phosphate + H(+). Activated by calmodulin. Functionally, this magnesium-dependent enzyme catalyzes the hydrolysis of ATP coupled with the translocation of calcium from the cytosol out of the cell, into the endoplasmic reticulum, or into organelles. The sequence is that of Probable calcium-transporting ATPase 6, plasma membrane-type from Oryza sativa subsp. japonica (Rice).